We begin with the raw amino-acid sequence, 162 residues long: SsrA-binding protein (162 aa).

This sequence belongs to the SmpB family.

The protein resides in the cytoplasm. Required for rescue of stalled ribosomes mediated by trans-translation. Binds to transfer-messenger RNA (tmRNA), required for stable association of tmRNA with ribosomes. tmRNA and SmpB together mimic tRNA shape, replacing the anticodon stem-loop with SmpB. tmRNA is encoded by the ssrA gene; the 2 termini fold to resemble tRNA(Ala) and it encodes a 'tag peptide', a short internal open reading frame. During trans-translation Ala-aminoacylated tmRNA acts like a tRNA, entering the A-site of stalled ribosomes, displacing the stalled mRNA. The ribosome then switches to translate the ORF on the tmRNA; the nascent peptide is terminated with the 'tag peptide' encoded by the tmRNA and targeted for degradation. The ribosome is freed to recommence translation, which seems to be the essential function of trans-translation. This chain is SsrA-binding protein, found in Sorangium cellulosum (strain So ce56) (Polyangium cellulosum (strain So ce56)).